The following is a 58-amino-acid chain: Small ribosomal subunit protein bS21 (58 aa).

The tract at residues 25–58 (KAGTLQEARKREHYEKPSVKRKRKSEAARKRKKI) is disordered. The span at 31-42 (EARKREHYEKPS) shows a compositional bias: basic and acidic residues. Residues 43–58 (VKRKRKSEAARKRKKI) are compositionally biased toward basic residues.

The protein belongs to the bacterial ribosomal protein bS21 family.

The polypeptide is Small ribosomal subunit protein bS21 (Streptococcus thermophilus (strain ATCC BAA-491 / LMD-9)).